A 966-amino-acid polypeptide reads, in one-letter code: Dynamin-like GTPase OPA1, mitochondrial (966 aa).

A mitochondrion-targeting transit peptide spans 1 to 86 (MLRAGSVVTC…GGHGYQQHRT (86 aa)). Residues 87-95 (FWVARLAAR) are Mitochondrial matrix-facing. The chain crosses the membrane as a helical span at residues 96-112 (LLKLRYILLGSAVGGGY). Topologically, residues 113-776 (TAKKTYDEWK…SVIADMVGPD (664 aa)) are mitochondrial intermembrane. The segment at 189–217 (ESALRAPDVPPASAAMADSGDKQFKKSSD) is disordered. Residues 207 to 217 (SGDKQFKKSSD) are compositionally biased toward basic and acidic residues. A coiled-coil region spans residues 213 to 259 (KKSSDKEKVDQLQEELLRTQLKYQRMLERLEKENKELRKVVLQKDDK). Positions 291–567 (QDHLPRVVVV…FWKMVRESVE (277 aa)) constitute a Dynamin-type G domain. Residues 301-308 (GDQSAGKT) are G1 motif. GTP is bound by residues Ser-304, Gly-306, Lys-307, Thr-308, Ser-309, and Gly-323. Thr-308 contacts Mg(2+). The G2 motif stretch occupies residues 327–330 (MMTR). Mg(2+) contacts are provided by Thr-329 and Asp-404. The segment at 404-407 (DLPG) is G3 motif. The interval 473–476 (TKVD) is G4 motif. Residues Lys-474, Asp-476, and Thr-509 each coordinate GTP. The tract at residues 507–510 (VVTG) is G5 motif. 2 stalk region regions span residues 595 to 842 (DRNE…IKDT) and 880 to 934 (CNDV…VQLI). The segment at 742-862 (TDKPQWDAAI…QKALLHCNLC (121 aa)) is paddle region. The stretch at 777–787 (WKQRWMSWKNR) is an intramembrane region. The Mitochondrial intermembrane portion of the chain corresponds to 788–966 (TPEQHTRNET…AFIEALHKEK (179 aa)). Cys-862 and Cys-880 form a disulfide bridge. Residues 901–966 (RQQLTNTEVR…AFIEALHKEK (66 aa)) are a coiled coil.

Belongs to the TRAFAC class dynamin-like GTPase superfamily. Dynamin/Fzo/YdjA family. In terms of assembly, oligomeric complex consisting of membrane-bound and soluble forms of OPA1. Post-translationally, cleaved by OMA1 or YME1L downstream of the transmembrane region in response to different signals to generate soluble forms. Cleaved by OMA1 at position S1 following stress conditions, generating the short soluble form (Dynamin-like GTPase OPA1, short form; S-OPA1).

The protein resides in the mitochondrion inner membrane. It localises to the mitochondrion intermembrane space. The catalysed reaction is GTP + H2O = GDP + phosphate + H(+). Dynamin-related GTPase that is essential for normal mitochondrial morphology by mediating fusion of the mitochondrial inner membranes, regulating cristae morphology and maintaining respiratory chain function. Exists in two forms: the transmembrane, long form (Dynamin-like GTPase OPA1, long form; L-OPA1), which is tethered to the inner mitochondrial membrane, and the short soluble form (Dynamin-like GTPase OPA1, short form; S-OPA1), which results from proteolytic cleavage and localizes in the intermembrane space. Both forms (L-OPA1 and S-OPA1) cooperate to catalyze the fusion of the mitochondrial inner membrane. The equilibrium between L-OPA1 and S-OPA1 is essential: excess levels of S-OPA1, produced by cleavage by OMA1 following loss of mitochondrial membrane potential, lead to an impaired equilibrium between L-OPA1 and S-OPA1, inhibiting mitochondrial fusion. The balance between L-OPA1 and S-OPA1 also influences cristae shape and morphology. Its role in mitochondrial morphology is required for mitochondrial genome maintenance. In terms of biological role, constitutes the transmembrane long form (L-OPA1) that plays a central role in mitochondrial inner membrane fusion and cristae morphology. L-OPA1 and the soluble short form (S-OPA1) form higher-order helical assemblies that coordinate the fusion of mitochondrial inner membranes. Inner membrane-anchored L-OPA1 molecules initiate membrane remodeling by recruiting soluble S-OPA1 to rapidly polymerize into a flexible cylindrical scaffold encaging the mitochondrial inner membrane. Once at the membrane surface, the formation of S-OPA1 helices induce bilayer curvature. OPA1 dimerization through the paddle region, which inserts into cardiolipin-containing membrane, promotes GTP hydrolysis and the helical assembly of a flexible OPA1 lattice on the membrane, which drives membrane curvature and mitochondrial fusion. Plays a role in the maintenance and remodeling of mitochondrial cristae, some invaginations of the mitochondrial inner membrane that provide an increase in the surface area. Probably acts by forming helical filaments at the inside of inner membrane tubes with the shape and dimensions of crista junctions. Functionally, constitutes the soluble short form (S-OPA1) generated by cleavage by OMA1, which plays a central role in mitochondrial inner membrane fusion and cristae morphology. The transmembrane long form (L-OPA1) and the S-OPA1 form higher-order helical assemblies that coordinate the fusion of mitochondrial inner membranes. Inner membrane-anchored L-OPA1 molecules initiate membrane remodeling by recruiting soluble S-OPA1 to rapidly polymerize into a flexible cylindrical scaffold encaging the mitochondrial inner membrane. Once at the membrane surface, the formation of S-OPA1 helices induce bilayer curvature. OPA1 dimerization through the paddle region, which inserts into cardiolipin-containing membrane, promotes GTP hydrolysis and the helical assembly of a flexible OPA1 lattice on the membrane, which drives membrane curvature and mitochondrial fusion. Excess levels of S-OPA1 produced by cleavage by OMA1 following stress conditions that induce loss of mitochondrial membrane potential, lead to an impaired equilibrium between L-OPA1 and S-OPA1, thereby inhibiting mitochondrial fusion. Plays a role in the maintenance and remodeling of mitochondrial cristae, some invaginations of the mitochondrial inner membrane that provide an increase in the surface area. Probably acts by forming helical filaments at the inside of inner membrane tubes with the shape and dimensions of crista junctions. This is Dynamin-like GTPase OPA1, mitochondrial from Danio rerio (Zebrafish).